A 366-amino-acid polypeptide reads, in one-letter code: ATP-dependent 6-phosphofructokinase (366 aa).

ATP-binding positions include G16, 78-79, and 118-121; these read RE and GNGT. Positions 74–94 are disordered; that stretch reads LGTSREKPFKPDPGEKDSEAG. The segment covering 77–94 has biased composition (basic and acidic residues); sequence SREKPFKPDPGEKDSEAG. N119 serves as a coordination point for Mg(2+). Residues 141–143, R178, 185–187, E238, R282, and 288–291 each bind substrate; these read TID, MGH, and YLQR. D143 acts as the Proton acceptor in catalysis.

Belongs to the phosphofructokinase type A (PFKA) family. Mixed-substrate PFK group III subfamily. In terms of assembly, homodimer or homotetramer. It depends on Mg(2+) as a cofactor.

It is found in the cytoplasm. The catalysed reaction is beta-D-fructose 6-phosphate + ATP = beta-D-fructose 1,6-bisphosphate + ADP + H(+). The protein operates within carbohydrate degradation; glycolysis; D-glyceraldehyde 3-phosphate and glycerone phosphate from D-glucose: step 3/4. Functionally, catalyzes the phosphorylation of D-fructose 6-phosphate to fructose 1,6-bisphosphate by ATP, the first committing step of glycolysis. The chain is ATP-dependent 6-phosphofructokinase from Spirochaeta thermophila (strain ATCC 49972 / DSM 6192 / RI 19.B1).